The sequence spans 172 residues: MKTKELVIMALFAAIGAALHSIIPPFLGGMKPDMMLIMMFMGILLFPRVQNVLVIGIVTGIISALTTAFPAGQIPNIIDKPVSAFLFFSLFLLFRKSRKTGAAAVLTVIGTILSGIVFLSSALLIVGLPGGFAALFAAVVLPAAVLNTISMIIIYPIVQTILRRSSFMEAAK.

4 consecutive transmembrane segments (helical) span residues 7 to 29 (VIMA…FLGG), 49 to 71 (VQNV…AFPA), 104 to 126 (AVLT…LLIV), and 136 to 158 (FAAV…YPIV).

Belongs to the vitamin uptake transporter (VUT/ECF) (TC 2.A.88) family. TrpP subfamily.

It is found in the cell membrane. In terms of biological role, probably involved in tryptophan uptake. This chain is Probable tryptophan transport protein (trpP), found in Bacillus subtilis (strain 168).